The following is a 434-amino-acid chain: GTPase Obg (434 aa).

An Obg domain is found at 2–160 (PTFVDQTKIE…RVLRLELKLL (159 aa)). Positions 161 to 334 (ADVGLVGFPS…LMNDTATLVE (174 aa)) constitute an OBG-type G domain. GTP-binding positions include 167 to 174 (GFPSVGKS), 192 to 196 (FTTLT), 214 to 217 (DLPG), 284 to 287 (SQMD), and 315 to 317 (SSV). The Mg(2+) site is built by serine 174 and threonine 194. The region spanning 356–434 (YKAPQKNEFT…IGKFVFEFVQ (79 aa)) is the OCT domain.

The protein belongs to the TRAFAC class OBG-HflX-like GTPase superfamily. OBG GTPase family. In terms of assembly, monomer. Mg(2+) is required as a cofactor.

It localises to the cytoplasm. In terms of biological role, an essential GTPase which binds GTP, GDP and possibly (p)ppGpp with moderate affinity, with high nucleotide exchange rates and a fairly low GTP hydrolysis rate. Plays a role in control of the cell cycle, stress response, ribosome biogenesis and in those bacteria that undergo differentiation, in morphogenesis control. The chain is GTPase Obg from Lactobacillus helveticus (strain DPC 4571).